The primary structure comprises 464 residues: A-type ATP synthase subunit B (464 aa).

The protein belongs to the ATPase alpha/beta chains family. As to quaternary structure, has multiple subunits with at least A(3), B(3), C, D, E, F, H, I and proteolipid K(x).

It is found in the cell membrane. In terms of biological role, component of the A-type ATP synthase that produces ATP from ADP in the presence of a proton gradient across the membrane. The B chain is a regulatory subunit. The protein is A-type ATP synthase subunit B of Methanococcus aeolicus (strain ATCC BAA-1280 / DSM 17508 / OCM 812 / Nankai-3).